The following is a 363-amino-acid chain: Ribosomal RNA large subunit methyltransferase M (363 aa).

S-adenosyl-L-methionine is bound by residues Ser-194, 227-230 (CPGG), Asp-246, Asp-266, and Asp-284. Residue Lys-313 is the Proton acceptor of the active site.

It belongs to the class I-like SAM-binding methyltransferase superfamily. RNA methyltransferase RlmE family. RlmM subfamily. In terms of assembly, monomer.

Its subcellular location is the cytoplasm. The catalysed reaction is cytidine(2498) in 23S rRNA + S-adenosyl-L-methionine = 2'-O-methylcytidine(2498) in 23S rRNA + S-adenosyl-L-homocysteine + H(+). Functionally, catalyzes the 2'-O-methylation at nucleotide C2498 in 23S rRNA. The polypeptide is Ribosomal RNA large subunit methyltransferase M (Haemophilus influenzae (strain PittGG)).